A 497-amino-acid polypeptide reads, in one-letter code: L-arabinose isomerase (497 aa).

Residues Glu-306, Glu-331, His-348, and His-447 each contribute to the Mn(2+) site.

This sequence belongs to the arabinose isomerase family. It depends on Mn(2+) as a cofactor.

The enzyme catalyses beta-L-arabinopyranose = L-ribulose. It participates in carbohydrate degradation; L-arabinose degradation via L-ribulose; D-xylulose 5-phosphate from L-arabinose (bacterial route): step 1/3. In terms of biological role, catalyzes the conversion of L-arabinose to L-ribulose. This chain is L-arabinose isomerase, found in Halalkalibacterium halodurans (strain ATCC BAA-125 / DSM 18197 / FERM 7344 / JCM 9153 / C-125) (Bacillus halodurans).